A 200-amino-acid chain; its full sequence is MKPYRDYYFLKAKHEKYPARSIYKLKEIDNRFCLFQKGMSVLDLGASPGSWSLGAAEKVGKTGRVVSCDIQTITIPLPSNVSFFQEDIFHRSDSFNNILIKEGPFHVIMSDMAPQTTGVKITDHSRSLELCLEALAIAKCYLLQQGSFIVKIFMGADTIELVKEMRQHFERVTSFKPCSSRTKSKEIFYVGLGFKRFTTS.

The S-adenosyl-L-methionine site is built by Gly49, Trp51, Asp69, Asp87, and Asp111. The active-site Proton acceptor is the Lys151.

Belongs to the class I-like SAM-binding methyltransferase superfamily. RNA methyltransferase RlmE family.

It localises to the cytoplasm. It carries out the reaction uridine(2552) in 23S rRNA + S-adenosyl-L-methionine = 2'-O-methyluridine(2552) in 23S rRNA + S-adenosyl-L-homocysteine + H(+). Functionally, specifically methylates the uridine in position 2552 of 23S rRNA at the 2'-O position of the ribose in the fully assembled 50S ribosomal subunit. This Lawsonia intracellularis (strain PHE/MN1-00) protein is Ribosomal RNA large subunit methyltransferase E.